Reading from the N-terminus, the 161-residue chain is S-ribosylhomocysteine lyase (161 aa).

Fe cation-binding residues include H57, H61, and C124.

The protein belongs to the LuxS family. Homodimer. The cofactor is Fe cation.

It carries out the reaction S-(5-deoxy-D-ribos-5-yl)-L-homocysteine = (S)-4,5-dihydroxypentane-2,3-dione + L-homocysteine. Its function is as follows. Involved in the synthesis of autoinducer 2 (AI-2) which is secreted by bacteria and is used to communicate both the cell density and the metabolic potential of the environment. The regulation of gene expression in response to changes in cell density is called quorum sensing. Catalyzes the transformation of S-ribosylhomocysteine (RHC) to homocysteine (HC) and 4,5-dihydroxy-2,3-pentadione (DPD). This is S-ribosylhomocysteine lyase from Macrococcus caseolyticus (strain JCSC5402) (Macrococcoides caseolyticum).